The chain runs to 420 residues: F-box/LRR-repeat protein At2g43260 (420 aa).

In terms of domain architecture, F-box spans 7 to 53; that stretch reads NPNSIDILPELLEEVLLRLPTKSILKCRIVSKQWRSLLESSRFAERH. LRR repeat units lie at residues 112–135 and 226–251; these read QDWI…LNHN and VYRI…QITV.

This chain is F-box/LRR-repeat protein At2g43260, found in Arabidopsis thaliana (Mouse-ear cress).